The sequence spans 245 residues: 1-(5-phosphoribosyl)-5-[(5-phosphoribosylamino)methylideneamino] imidazole-4-carboxamide isomerase (245 aa).

Asp-7 acts as the Proton acceptor in catalysis. Asp-129 functions as the Proton donor in the catalytic mechanism.

It belongs to the HisA/HisF family.

It localises to the cytoplasm. It catalyses the reaction 1-(5-phospho-beta-D-ribosyl)-5-[(5-phospho-beta-D-ribosylamino)methylideneamino]imidazole-4-carboxamide = 5-[(5-phospho-1-deoxy-D-ribulos-1-ylimino)methylamino]-1-(5-phospho-beta-D-ribosyl)imidazole-4-carboxamide. It participates in amino-acid biosynthesis; L-histidine biosynthesis; L-histidine from 5-phospho-alpha-D-ribose 1-diphosphate: step 4/9. The protein is 1-(5-phosphoribosyl)-5-[(5-phosphoribosylamino)methylideneamino] imidazole-4-carboxamide isomerase of Shewanella sp. (strain MR-4).